The primary structure comprises 510 residues: Flavonoid 3',5'-hydroxylase (510 aa).

Cysteine 447 is a heme binding site.

Belongs to the cytochrome P450 family. Requires heme as cofactor.

It carries out the reaction a 3',5'-unsubstituted flavanone + 2 reduced [NADPH--hemoprotein reductase] + 2 O2 = a 3',5'-dihydroxyflavanone + 2 oxidized [NADPH--hemoprotein reductase] + 2 H2O + 2 H(+). Its pathway is pigment biosynthesis; anthocyanin biosynthesis. Its function is as follows. Catalyzes the 3'5'-hydroxylation of naringenin and eriodictyol to form 5,7,3,'4',5'-pentahydroxyflavanone and 3',5'-hydroxylation of dihydrokaempferol and dihydroquercetin to form dihydromyricetin. In Eustoma exaltatum subsp. russellianum (Bluebells), this protein is Flavonoid 3',5'-hydroxylase (CYP75A7).